The chain runs to 466 residues: Ribosome biogenesis protein YTM1 (466 aa).

The tract at residues 8 to 95 (IKINFFTNEE…EASLNLEYTR (88 aa)) is ubiquitin-like (UBL) domain. A sufficient for interaction with ERB1 and association with 66S pre-ribosomes region spans residues 105–466 (SFNNDDWISS…QINKGSDITK (362 aa)). 7 WD repeats span residues 120–159 (PLSA…EKQY), 161–199 (GHSG…NIED), 214–253 (GHKA…MTTI), 291–331 (GHSQ…CVDT), 333–372 (TTGY…TTTE), 381–421 (GHTN…SLYT), and 431–466 (KGQD…DITK).

The protein belongs to the WD repeat WDR12/YTM1 family. In terms of assembly, component of the NOP7 complex, composed of ERB1, NOP7 and YTM1. The complex is held together by ERB1, which interacts with NOP7 via its N-terminal domain and with YTM1 via a high-affinity interaction between the seven-bladed beta-propeller domains of the 2 proteins. The NOP7 complex associates with the 66S pre-ribosome. Interacts (via UBL domain) with MDN1 (via VWFA/MIDAS domain).

It is found in the nucleus. The protein resides in the nucleolus. It localises to the nucleoplasm. Functionally, component of the NOP7 complex, which is required for maturation of the 25S and 5.8S ribosomal RNAs and formation of the 60S ribosome. This is Ribosome biogenesis protein YTM1 from Debaryomyces hansenii (strain ATCC 36239 / CBS 767 / BCRC 21394 / JCM 1990 / NBRC 0083 / IGC 2968) (Yeast).